We begin with the raw amino-acid sequence, 134 residues long: ATP synthase epsilon chain, chloroplastic (134 aa).

This sequence belongs to the ATPase epsilon chain family. In terms of assembly, F-type ATPases have 2 components, CF(1) - the catalytic core - and CF(0) - the membrane proton channel. CF(1) has five subunits: alpha(3), beta(3), gamma(1), delta(1), epsilon(1). CF(0) has three main subunits: a, b and c.

Its subcellular location is the plastid. It localises to the chloroplast thylakoid membrane. Functionally, produces ATP from ADP in the presence of a proton gradient across the membrane. In Nymphaea alba (White water-lily), this protein is ATP synthase epsilon chain, chloroplastic.